The following is a 505-amino-acid chain: Maturase K (505 aa).

This sequence belongs to the intron maturase 2 family. MatK subfamily.

It localises to the plastid. The protein resides in the chloroplast. Usually encoded in the trnK tRNA gene intron. Probably assists in splicing its own and other chloroplast group II introns. In Kunzea ericoides (White teatree), this protein is Maturase K.